The following is a 71-amino-acid chain: MNYIAAAIAIMGAAIGAGYGNGQVISKTIESMARQPEMSGQLRTTMFIGVALVEAVPILGVVIALILVFAV.

2 helical membrane passes run 4–24 (IAAA…NGQV) and 47–67 (FIGV…ALIL).

The protein belongs to the ATPase C chain family. F-type ATPases have 2 components, F(1) - the catalytic core - and F(0) - the membrane proton channel. F(1) has five subunits: alpha(3), beta(3), gamma(1), delta(1), epsilon(1). F(0) has three main subunits: a(1), b(2) and c(10-14). The alpha and beta chains form an alternating ring which encloses part of the gamma chain. F(1) is attached to F(0) by a central stalk formed by the gamma and epsilon chains, while a peripheral stalk is formed by the delta and b chains.

The protein localises to the cell membrane. Functionally, f(1)F(0) ATP synthase produces ATP from ADP in the presence of a proton or sodium gradient. F-type ATPases consist of two structural domains, F(1) containing the extramembraneous catalytic core and F(0) containing the membrane proton channel, linked together by a central stalk and a peripheral stalk. During catalysis, ATP synthesis in the catalytic domain of F(1) is coupled via a rotary mechanism of the central stalk subunits to proton translocation. Its function is as follows. Key component of the F(0) channel; it plays a direct role in translocation across the membrane. A homomeric c-ring of between 10-14 subunits forms the central stalk rotor element with the F(1) delta and epsilon subunits. The polypeptide is ATP synthase subunit c (Enterococcus hirae (strain ATCC 9790 / DSM 20160 / JCM 8729 / LMG 6399 / NBRC 3181 / NCIMB 6459 / NCDO 1258 / NCTC 12367 / WDCM 00089 / R)).